The chain runs to 278 residues: HTH-type transcriptional activator RhaS (278 aa).

Residues Asn-174–Gly-272 form the HTH araC/xylS-type domain. DNA-binding regions (H-T-H motif) lie at residues Glu-191–Thr-212 and Val-239–Phe-262.

As to quaternary structure, binds DNA as a dimer.

The protein resides in the cytoplasm. Activates expression of the rhaBAD and rhaT operons. In Salmonella arizonae (strain ATCC BAA-731 / CDC346-86 / RSK2980), this protein is HTH-type transcriptional activator RhaS.